Reading from the N-terminus, the 275-residue chain is Large ribosomal subunit protein uL2 (275 aa).

The segment at 210–275 (GRNRHRGIRP…DKLIISRKKK (66 aa)) is disordered. Residues 257-275 (FKTRKKKASDKLIISRKKK) show a composition bias toward basic residues.

The protein belongs to the universal ribosomal protein uL2 family. In terms of assembly, part of the 50S ribosomal subunit. Forms a bridge to the 30S subunit in the 70S ribosome.

Functionally, one of the primary rRNA binding proteins. Required for association of the 30S and 50S subunits to form the 70S ribosome, for tRNA binding and peptide bond formation. It has been suggested to have peptidyltransferase activity; this is somewhat controversial. Makes several contacts with the 16S rRNA in the 70S ribosome. The protein is Large ribosomal subunit protein uL2 of Helicobacter hepaticus (strain ATCC 51449 / 3B1).